We begin with the raw amino-acid sequence, 73 residues long: MGSFSIWHWMIVLVIVLLVFGRGKIPELMGDMAKGIKSFKKGMADDDVADDKRTVEHRADETVSAVKEKASKS.

A helical transmembrane segment spans residues 1–21 (MGSFSIWHWMIVLVIVLLVFG).

This sequence belongs to the TatA/E family. In terms of assembly, the Tat system comprises two distinct complexes: a TatABC complex, containing multiple copies of TatA, TatB and TatC subunits, and a separate TatA complex, containing only TatA subunits. Substrates initially bind to the TatABC complex, which probably triggers association of the separate TatA complex to form the active translocon.

The protein localises to the cell inner membrane. Its function is as follows. Part of the twin-arginine translocation (Tat) system that transports large folded proteins containing a characteristic twin-arginine motif in their signal peptide across membranes. TatA could form the protein-conducting channel of the Tat system. This chain is Sec-independent protein translocase protein TatA, found in Mesorhizobium japonicum (strain LMG 29417 / CECT 9101 / MAFF 303099) (Mesorhizobium loti (strain MAFF 303099)).